A 302-amino-acid chain; its full sequence is Alpha-N-acetyl-neuraminyl-2,3-beta-galactosyl-1,3-N-acetyl-galactosaminide alpha-2,6-sialyltransferase (302 aa).

Residues 1–6 (MKAPGR) are Cytoplasmic-facing. Residues 7–27 (LVLIILCSVVFSAVYILLCCW) form a helical; Signal-anchor for type II membrane protein membrane-spanning segment. The Lumenal portion of the chain corresponds to 28 to 302 (AGLPLCLATC…VFAHPSWRTE (275 aa)). Cys76 and Cys225 are joined by a disulfide. Asn135 carries an N-linked (GlcNAc...) asparagine glycan.

This sequence belongs to the glycosyltransferase 29 family. Ubiquitous.

The protein localises to the golgi apparatus membrane. It catalyses the reaction an alpha-Neu5Ac-(2-&gt;3)-beta-D-Gal-(1-&gt;3)-D-GlcNAc derivative + CMP-N-acetyl-beta-neuraminate = an alpha-Neu5Ac-(2-&gt;3)-beta-D-Gal-(1-&gt;3)-[alpha-Neu5Ac-(2-&gt;6)]-D-GlcNAc derivative + CMP + H(+). The enzyme catalyses N-acetyl-alpha-neuraminosyl-(2-&gt;3)-beta-D-galactosyl-(1-&gt;3)-N-acetyl-D-galactosamine + CMP-N-acetyl-beta-neuraminate = N-acetyl-alpha-neuraminosyl-(2-&gt;3)-beta-D-galactosyl-(1-&gt;3)-[N-acetyl-alpha-neuraminosyl-(2-&gt;6)]-N-acetyl-D-galactosamine + CMP + H(+). The catalysed reaction is a ganglioside GM1b (d18:1(4E)) + CMP-N-acetyl-beta-neuraminate = a ganglioside GD1alpha (d18:1(4E)) + CMP + H(+). It carries out the reaction 3-O-[alpha-Neu5Ac-(2-&gt;3)-beta-D-Gal-(1-&gt;3)-alpha-D-GalNAc]-L-Ser-[protein] + CMP-N-acetyl-beta-neuraminate = a 3-O-{alpha-Neu5Ac-(2-&gt;3)-beta-D-Gal-(1-&gt;3)-[alpha-Neu5Ac-(2-&gt;6)]-alpha-D-GalNAc}-L-seryl-[protein] + CMP + H(+). It catalyses the reaction 3-O-[alpha-Neu5Ac-(2-&gt;3)-beta-D-Gal-(1-&gt;3)-alpha-D-GalNAc]-L-Thr-[protein] + CMP-N-acetyl-beta-neuraminate = a 3-O-{alpha-Neu5Ac-(2-&gt;3)-beta-D-Gal-(1-&gt;3)-[alpha-Neu5Ac-(2-&gt;6)]-alpha-D-GalNAc}-L-threonyl-[protein] + CMP + H(+). The protein operates within protein modification; protein glycosylation. Its pathway is glycolipid biosynthesis. Functionally, transfers the sialyl group (N-acetyl-alpha-neuraminyl or NeuAc) from CMP-NeuAc to the GalNAc residue on the NeuAc-alpha-2,3-Gal-beta-1,3-GalNAc sequence of glycoproteins and glycolipids forming an alpha-2,6-linkage. Produces branched type disialyl structures by transfer of a sialyl group onto a GalNAc residue inside the backbone core chains. Prefers O-glycans to glycoproteins or glycolipids. This Homo sapiens (Human) protein is Alpha-N-acetyl-neuraminyl-2,3-beta-galactosyl-1,3-N-acetyl-galactosaminide alpha-2,6-sialyltransferase (ST6GALNAC4).